A 209-amino-acid polypeptide reads, in one-letter code: Large ribosomal subunit protein uL3 (209 aa).

Residues 133–152 (THGNSLSHRVPGSIGQNQTP) form a disordered region. Gln150 carries the N5-methylglutamine modification.

Belongs to the universal ribosomal protein uL3 family. Part of the 50S ribosomal subunit. Forms a cluster with proteins L14 and L19. In terms of processing, methylated by PrmB.

Its function is as follows. One of the primary rRNA binding proteins, it binds directly near the 3'-end of the 23S rRNA, where it nucleates assembly of the 50S subunit. This Shigella sonnei (strain Ss046) protein is Large ribosomal subunit protein uL3.